We begin with the raw amino-acid sequence, 928 residues long: Heme/hemopexin-binding protein (928 aa).

The N-terminal stretch at 1-21 (MYKLNVISLIILTTCSGAAYA) is a signal peptide. 10 repeat units span residues 101–106 (NGKVYL), 149–154 (KDRQVL), 155–160 (KEGLVL), 161–166 (KDGQVV), 167–172 (KEGQVI), 205–210 (NGKVYL), 279–284 (NGKVVL), 410–415 (NGKVNL), 635–640 (NGFVHL), and 674–679 (NGKVSM). Residues 101–679 (NGKVYLANPN…RLGMNGKVSM (579 aa)) form a 6 X 6 AA approximate repeats region. The 4 X 6 AA approximate tandem repeats stretch occupies residues 149–172 (KDRQVLKEGLVLKDGQVVKEGQVI).

It localises to the secreted. In terms of biological role, binds heme/hemopexin complexes. The chain is Heme/hemopexin-binding protein (hxuA) from Haemophilus influenzae.